Here is a 435-residue protein sequence, read N- to C-terminus: T-cell defective protein 2 (435 aa).

The interval 65–146 is disordered; that stretch reads NASTSFQSQP…KTPDSLRKSI (82 aa). Positions 322-352 form a coiled coil; that stretch reads TKISAKKEKEQKKSAAKEAALKEAKEKEMRI. Residues 393-419 form a disordered region; it reads FFKANPPPAPRAPQAPELASGPRRIPT.

Strongly expressed in the cytoplasm of the pharynx muscle cells and several head neurons, probably the IL1s or IL2s, throughout development. Also expressed in some other unidentified neurons in the tail region. Weakly expressed in the nuclei of the T-cells and the T-cell daughters. Not expressed in gonads and in P12 cell.

It localises to the nucleus. The protein resides in the cytoplasm. Its function is as follows. May act synergistically with the Wnt pathways to control T-cell fate specification, gonad development, and P12 cell fate specification. Required for the distribution of pop-1 and tlp-1 proteins. This chain is T-cell defective protein 2 (tcl-2), found in Caenorhabditis elegans.